The following is a 436-amino-acid chain: Serine hydroxymethyltransferase (436 aa).

Residues Leu133 and 137–139 (GHL) contribute to the (6S)-5,6,7,8-tetrahydrofolate site. Lys242 carries the post-translational modification N6-(pyridoxal phosphate)lysine. Residue 366–368 (SPF) participates in (6S)-5,6,7,8-tetrahydrofolate binding.

It belongs to the SHMT family. In terms of assembly, homodimer. Requires pyridoxal 5'-phosphate as cofactor.

Its subcellular location is the cytoplasm. The catalysed reaction is (6R)-5,10-methylene-5,6,7,8-tetrahydrofolate + glycine + H2O = (6S)-5,6,7,8-tetrahydrofolate + L-serine. It functions in the pathway one-carbon metabolism; tetrahydrofolate interconversion. Its pathway is amino-acid biosynthesis; glycine biosynthesis; glycine from L-serine: step 1/1. Its function is as follows. Catalyzes the reversible interconversion of serine and glycine with tetrahydrofolate (THF) serving as the one-carbon carrier. This reaction serves as the major source of one-carbon groups required for the biosynthesis of purines, thymidylate, methionine, and other important biomolecules. Also exhibits THF-independent aldolase activity toward beta-hydroxyamino acids, producing glycine and aldehydes, via a retro-aldol mechanism. In Novosphingobium aromaticivorans (strain ATCC 700278 / DSM 12444 / CCUG 56034 / CIP 105152 / NBRC 16084 / F199), this protein is Serine hydroxymethyltransferase.